Reading from the N-terminus, the 704-residue chain is DNA ligase (704 aa).

Residues 44–48, 93–94, and E125 each bind NAD(+); these read DYEYD and SI. The active-site N6-AMP-lysine intermediate is the K127. Residues R148, E184, K300, and K324 each contribute to the NAD(+) site. Zn(2+) is bound by residues C418, C421, C436, and C442. In terms of domain architecture, BRCT spans 625-704; the sequence is IISSNISGKI…DEWEHLINEK (80 aa).

The protein belongs to the NAD-dependent DNA ligase family. LigA subfamily. Mg(2+) serves as cofactor. It depends on Mn(2+) as a cofactor.

It catalyses the reaction NAD(+) + (deoxyribonucleotide)n-3'-hydroxyl + 5'-phospho-(deoxyribonucleotide)m = (deoxyribonucleotide)n+m + AMP + beta-nicotinamide D-nucleotide.. Functionally, DNA ligase that catalyzes the formation of phosphodiester linkages between 5'-phosphoryl and 3'-hydroxyl groups in double-stranded DNA using NAD as a coenzyme and as the energy source for the reaction. It is essential for DNA replication and repair of damaged DNA. This is DNA ligase from Pelobacter propionicus (strain DSM 2379 / NBRC 103807 / OttBd1).